We begin with the raw amino-acid sequence, 141 residues long: N,N-dimethylformamidase alpha subunit (141 aa).

As to quaternary structure, heterotetramer of two DmfA1 (alpha) and two DmfA2 (beta) subunits.

It catalyses the reaction N,N-dimethylformamide + H2O = dimethylamine + formate. Its function is as follows. Hydrolyzes N,N-dimethylformamide, and to a lesser extent N,N-dimethylacetamide and N,N-diethylacetamide. Has no activity against the substituted amides N-methylformamide, N-ethylformamide, N-ethylformamide and N-methylacetamide or the unsubstituted amides formamide, nicotinamide, acetoamide, benzamide, acetamide and acrylamide. The sequence is that of N,N-dimethylformamidase alpha subunit from Paracoccus aminophilus.